Here is a 307-residue protein sequence, read N- to C-terminus: Transcriptional repressor scratch 2 (307 aa).

The tract at residues Met1–Val20 is SNAG domain. Disordered stretches follow at residues Leu34–Ser90 and Gly116–Gln148. Over residues Gly124–Gln148 the composition is skewed to gly residues. 4 consecutive C2H2-type zinc fingers follow at residues His155–His177, Arg186–His208, His212–His234, and Phe240–His262. The segment at Tyr268–Cys291 adopts a C2H2-type 5; atypical zinc-finger fold.

It belongs to the snail C2H2-type zinc-finger protein family.

The protein localises to the nucleus. May be involved in transcriptional regulation. The chain is Transcriptional repressor scratch 2 (SCRT2) from Homo sapiens (Human).